Reading from the N-terminus, the 180-residue chain is MSGLTIFSDQEPQQPLWQSRDAQAIGQQLAQIGVRFERWQADRELGENPDPAVVIAAYQHQIDRLVAEKGYQSWDVISMRPDNAQREVLRSKFLSEHTHGEDEVRFFVEGAGLFCLHLDGKIFQILCEKNDLISVPANTRHWFDMGSAPNFTAIRVFDNPEGWVAHFTGDNIADAYPRLD.

Fe(2+)-binding residues include His-97, His-99, Glu-103, and His-141. His-97, His-99, Glu-103, and His-141 together coordinate Ni(2+).

It belongs to the acireductone dioxygenase (ARD) family. Monomer. It depends on Fe(2+) as a cofactor. Ni(2+) is required as a cofactor.

It catalyses the reaction 1,2-dihydroxy-5-(methylsulfanyl)pent-1-en-3-one + O2 = 3-(methylsulfanyl)propanoate + CO + formate + 2 H(+). The catalysed reaction is 1,2-dihydroxy-5-(methylsulfanyl)pent-1-en-3-one + O2 = 4-methylsulfanyl-2-oxobutanoate + formate + 2 H(+). Its pathway is amino-acid biosynthesis; L-methionine biosynthesis via salvage pathway; L-methionine from S-methyl-5-thio-alpha-D-ribose 1-phosphate: step 5/6. In terms of biological role, catalyzes 2 different reactions between oxygen and the acireductone 1,2-dihydroxy-3-keto-5-methylthiopentene (DHK-MTPene) depending upon the metal bound in the active site. Fe-containing acireductone dioxygenase (Fe-ARD) produces formate and 2-keto-4-methylthiobutyrate (KMTB), the alpha-ketoacid precursor of methionine in the methionine recycle pathway. Ni-containing acireductone dioxygenase (Ni-ARD) produces methylthiopropionate, carbon monoxide and formate, and does not lie on the methionine recycle pathway. This Serratia proteamaculans (strain 568) protein is Acireductone dioxygenase.